A 424-amino-acid polypeptide reads, in one-letter code: MKLEMICTGEEVLAGQIVDTNAAWFANTLMGKGIECQRRITVGDRLEDLVAVFKERSTEADIIMVNGGLGPTSDDLSTEAMALAMGVPLVESKEWRTKLEAWFTRNNRVMAASNLKQALLPEGAVMIDNPVGTACGFAVKLNRAWLFFTPGVPFEFKRMVKEQFIPFVEKQFALSESVSVKKLLTLGRGESSLADELDVIQLPEGVTLGYRSYMPYIEIKLFARGQSAIDSLPDIEAQVKKVLGNGIVAENITTLDQEIHERLINSGLSLSVAESCTGGMITSGLVAFAGSSSYLHQGLVTYSNEAKVKVLGVNSQTLDDYGAVSIATVEEMAKGARGILGSDYALATSGIAGPEGGTDEKPVGTVAIALATKSGIYSQMVKLPGRSRALVRALSTAVAYDMLRRELLGEAVIVDYSSFSRFCK.

This sequence belongs to the CinA family.

The protein is CinA-like protein of Shewanella sediminis (strain HAW-EB3).